The primary structure comprises 755 residues: Tryptophan 2-monooxygenase (755 aa).

Residues Ser247, Glu267, Lys275, and Arg295 each coordinate FMN. Arg295 is a substrate binding site.

The protein belongs to the tryptophan 2-monooxygenase family. FMN is required as a cofactor.

It catalyses the reaction L-tryptophan + O2 = indole-3-acetamide + CO2 + H2O. Its pathway is plant hormone metabolism; auxin biosynthesis. The chain is Tryptophan 2-monooxygenase (iaaM) from Agrobacterium vitis (Rhizobium vitis).